The primary structure comprises 378 residues: Alkaline elastase YaB (378 aa).

The signal sequence occupies residues methionine 1–alanine 27. Residues alanine 28 to methionine 110 constitute a propeptide that is removed on maturation. Glutamine 111 contacts Ca(2+). The Peptidase S8 domain occupies proline 114–threonine 377. Aspartate 141 (charge relay system) is an active-site residue. Aspartate 149 is a Ca(2+) binding site. Histidine 171 functions as the Charge relay system in the catalytic mechanism. Residues leucine 182, asparagine 184, isoleucine 186, valine 188, alanine 272, tyrosine 274, and alanine 277 each contribute to the Ca(2+) site. The active-site Charge relay system is the serine 324.

The protein belongs to the peptidase S8 family. The cofactor is Ca(2+).

It is found in the secreted. Functionally, digests elastin efficiently, has a substrate preference for Ala in P1 position. The chain is Alkaline elastase YaB (ale) from Bacillus sp. (strain YaB).